The primary structure comprises 389 residues: Galactokinase (389 aa).

33–36 (EHTD) contacts substrate. ATP is bound by residues serine 67 and 124 to 130 (GAGLSSS). Residues serine 130 and glutamate 162 each contribute to the Mg(2+) site. The active-site Proton acceptor is the aspartate 174. Tyrosine 224 contributes to the substrate binding site.

The protein belongs to the GHMP kinase family. GalK subfamily.

The protein resides in the cytoplasm. It catalyses the reaction alpha-D-galactose + ATP = alpha-D-galactose 1-phosphate + ADP + H(+). Its pathway is carbohydrate metabolism; galactose metabolism. Functionally, catalyzes the transfer of the gamma-phosphate of ATP to D-galactose to form alpha-D-galactose-1-phosphate (Gal-1-P). In Fusobacterium nucleatum subsp. nucleatum (strain ATCC 25586 / DSM 15643 / BCRC 10681 / CIP 101130 / JCM 8532 / KCTC 2640 / LMG 13131 / VPI 4355), this protein is Galactokinase.